The chain runs to 172 residues: Signal peptidase complex catalytic subunit SEC11 (172 aa).

Over 1–14 the chain is Cytoplasmic; the sequence is MLSSLGNPRQAAAQ. Residues 15–35 traverse the membrane as a helical; Signal-anchor for type II membrane protein segment; it reads LMNFALILSTAFMMWKGLSVI. At 36–172 the chain is on the lumenal side; that stretch reads TDSPSPIVVV…MGLLVVLQRE (137 aa). Active-site charge relay system residues include Ser-49 and His-90. Asn-111 carries an N-linked (GlcNAc...) asparagine glycan. The Charge relay system role is filled by Asp-115. A C-terminal short (CTS) helix region spans residues 158–169; the sequence is VMLGIMGLLVVL.

It belongs to the peptidase S26B family. In terms of assembly, component of the signal peptidase complex (SPC) composed of a catalytic subunit SEC11 and three accessory subunits SPC1, SPC2 and SPC3. The complex induces a local thinning of the ER membrane which is used to measure the length of the signal peptide (SP) h-region of protein substrates. This ensures the selectivity of the complex towards h-regions shorter than 18-20 amino acids. SPC associates with the translocon complex.

The protein resides in the endoplasmic reticulum membrane. It carries out the reaction Cleavage of hydrophobic, N-terminal signal or leader sequences from secreted and periplasmic proteins.. Catalytic component of the signal peptidase complex (SPC) which catalyzes the cleavage of N-terminal signal sequences from nascent proteins as they are translocated into the lumen of the endoplasmic reticulum. Specifically cleaves N-terminal signal peptides that contain a hydrophobic alpha-helix (h-region) shorter than 18-20 amino acids. The sequence is that of Signal peptidase complex catalytic subunit SEC11 (SEC11) from Fusarium vanettenii (strain ATCC MYA-4622 / CBS 123669 / FGSC 9596 / NRRL 45880 / 77-13-4) (Fusarium solani subsp. pisi).